The following is a 188-amino-acid chain: Probable manganese efflux pump MntP (188 aa).

5 consecutive transmembrane segments (helical) span residues 3–23, 66–86, 106–128, 143–163, and 168–188; these read ITAT…ASIG, LEWN…RMII, WLLV…GLAF, ATLI…SIIG, and ILGG…HFHG.

It belongs to the MntP (TC 9.B.29) family.

It localises to the cell inner membrane. Probably functions as a manganese efflux pump. The polypeptide is Probable manganese efflux pump MntP (Escherichia coli O7:K1 (strain IAI39 / ExPEC)).